The chain runs to 401 residues: Argininosuccinate synthase (401 aa).

10-18 lines the ATP pocket; that stretch reads AYSGGVDTS. Residue Tyr89 coordinates L-citrulline. Gly119 is an ATP binding site. Residues Thr121, Asn125, and Asp126 each coordinate L-aspartate. L-citrulline is bound at residue Asn125. The L-citrulline site is built by Arg129, Ser177, Ser186, Glu262, and Tyr274.

Belongs to the argininosuccinate synthase family. Type 1 subfamily. Homotetramer.

The protein localises to the cytoplasm. The catalysed reaction is L-citrulline + L-aspartate + ATP = 2-(N(omega)-L-arginino)succinate + AMP + diphosphate + H(+). It participates in amino-acid biosynthesis; L-arginine biosynthesis; L-arginine from L-ornithine and carbamoyl phosphate: step 2/3. The chain is Argininosuccinate synthase from Thermosynechococcus vestitus (strain NIES-2133 / IAM M-273 / BP-1).